Here is a 391-residue protein sequence, read N- to C-terminus: Protein-glutamate methylesterase/protein-glutamine glutaminase (391 aa).

One can recognise a Response regulatory domain in the interval 4–121 (KVLVVDDSSF…ARNNEDAIKL (118 aa)). Aspartate 55 bears the 4-aspartylphosphate mark. The 195-residue stretch at 197-391 (SGKHYQLVAI…IRLKTEVGCG (195 aa)) folds into the CheB-type methylesterase domain. Catalysis depends on residues serine 209, histidine 236, and aspartate 333.

This sequence belongs to the CheB family. Phosphorylated by CheA. Phosphorylation of the N-terminal regulatory domain activates the methylesterase activity.

The protein localises to the cytoplasm. The catalysed reaction is [protein]-L-glutamate 5-O-methyl ester + H2O = L-glutamyl-[protein] + methanol + H(+). It carries out the reaction L-glutaminyl-[protein] + H2O = L-glutamyl-[protein] + NH4(+). Functionally, involved in chemotaxis. Part of a chemotaxis signal transduction system that modulates chemotaxis in response to various stimuli. Catalyzes the demethylation of specific methylglutamate residues introduced into the chemoreceptors (methyl-accepting chemotaxis proteins or MCP) by CheR. Also mediates the irreversible deamidation of specific glutamine residues to glutamic acid. The polypeptide is Protein-glutamate methylesterase/protein-glutamine glutaminase (Pseudoalteromonas translucida (strain TAC 125)).